The chain runs to 523 residues: Cytidine and dCMP deaminase domain-containing protein 1 (523 aa).

Over residues 1-11 (MKETDQMQSLE) the composition is skewed to polar residues. Disordered regions lie at residues 1–27 (MKET…GSMT) and 55–81 (QGQK…RVST). The region spanning 71 to 169 (GDNEELTRVS…SLLTEASSSE (99 aa)) is the CMP/dCMP-type deaminase 1 domain. Residues H110, C135, and C138 each contribute to the Zn(2+) site. The Nuclear export signal motif lies at 272–284 (NLRQNMKDLILLL). The CMP/dCMP-type deaminase 2 domain maps to 318-483 (EVARHCMVQA…LNPSEAYSLD (166 aa)). H399 serves as a coordination point for Zn(2+). E401 (proton donor) is an active-site residue. 2 residues coordinate Zn(2+): C427 and C430. Residues 478–523 (EAYSLDPNEPERRENGVLRRRSAKDEQRSSKRPRLETRSAGRATLQ) form a disordered region. A compositionally biased stretch (basic and acidic residues) spans 486–516 (EPERRENGVLRRRSAKDEQRSSKRPRLETRS). Positions 489–511 (RRENGVLRRRSAKDEQRSSKRPR) match the Bipartite nuclear localization signal motif.

The protein belongs to the cytidine and deoxycytidylate deaminase family. Requires Zn(2+) as cofactor.

Its subcellular location is the cytoplasm. The protein resides in the nucleus. It carries out the reaction 2'-deoxycytidine + H2O + H(+) = 2'-deoxyuridine + NH4(+). It catalyses the reaction cytidine + H2O + H(+) = uridine + NH4(+). Catalyzes the deamination of cytidine and deoxycytidine into uridine and deoxyuridine, respectively. May play an important role in testicular development and spermatogenesis. The sequence is that of Cytidine and dCMP deaminase domain-containing protein 1 (Cdadc1) from Mus musculus (Mouse).